The primary structure comprises 439 residues: Fibulin-7 (439 aa).

The signal sequence occupies residues 1 to 24 (MVPSSPRALFLLLLILACPEPRAS). Positions 28–53 (LSKQQLLSAIRQLQQLLKGQETRFAE) form a coiled coil. The Sushi domain occupies 79-136 (VSCPALNTPADGRKFGSKYLVDHEVHFTCNPGFRLVGPSSVVCLPNGTWTGEQPHCRG). 11 cysteine pairs are disulfide-bonded: Cys81–Cys121, Cys107–Cys134, Cys140–Cys151, Cys145–Cys160, Cys162–Cys171, Cys228–Cys244, Cys240–Cys253, Cys255–Cys268, Cys274–Cys287, Cys281–Cys296, and Cys301–Cys318. N-linked (GlcNAc...) asparagine glycosylation occurs at Asn124. The EGF-like 1; calcium-binding domain occupies 136–172 (GISECSSQPCQNGGTCVEGVNQYRCICPPGRTGNRCQ). Residues 224–269 (DVNECELYGQEGRPRLCMHACVNTPGSYRCTCPGGYRTLADGKSCE) enclose the EGF-like 2; calcium-binding domain. One can recognise an EGF-like 3; calcium-binding domain in the interval 270-319 (DVDECVGLQPVCPQGTTCINTGGSFQCVSPECPEGSGNVSYVKTSPFQCE). N-linked (GlcNAc...) asparagine glycosylation occurs at Asn307.

It belongs to the fibulin family. Interacts with heparin, FBLN1, FN1 and DSPP. Preferentially binds dental mesenchyme cells and odontoblasts but not dental epithelial cells or nondental cells. Binding requires a heparan sulfate-containing receptor on the cell surface as well as an integrin. Post-translationally, N-glycosylated.

The protein resides in the secreted. It localises to the extracellular space. It is found in the extracellular matrix. Functionally, an adhesion molecule that interacts with extracellular matrix molecules in developing teeth and may play important roles in differentiation and maintenance of odontoblasts as well as in dentin formation. The protein is Fibulin-7 (FBLN7) of Homo sapiens (Human).